Here is a 253-residue protein sequence, read N- to C-terminus: LexA repressor (253 aa).

Positions 1 to 34 are disordered; it reads MAIEKKPAGARGSRGSRTVKTLPNGKPDPASLSD. Residues 56–76 constitute a DNA-binding region (H-T-H motif); that stretch reads IREIGDAAGLQSTSSVAYQLK. Residues 82–106 are compositionally biased toward basic and acidic residues; the sequence is GFLRRDPNKPRAVDVRHLPETESRS. The tract at residues 82-127 is disordered; that stretch reads GFLRRDPNKPRAVDVRHLPETESRSSKAATQAKSKAPQAGAHDPEL. Residues 107–120 show a composition bias toward low complexity; that stretch reads SKAATQAKSKAPQA. Catalysis depends on for autocatalytic cleavage activity residues Ser177 and Lys214.

It belongs to the peptidase S24 family. As to quaternary structure, homodimer.

It catalyses the reaction Hydrolysis of Ala-|-Gly bond in repressor LexA.. In terms of biological role, represses a number of genes involved in the response to DNA damage (SOS response), including recA and lexA. In the presence of single-stranded DNA, RecA interacts with LexA causing an autocatalytic cleavage which disrupts the DNA-binding part of LexA, leading to derepression of the SOS regulon and eventually DNA repair. In Corynebacterium glutamicum (strain R), this protein is LexA repressor.